Consider the following 286-residue polypeptide: Phosphatidylserine decarboxylase proenzyme (286 aa).

Active-site charge relay system; for autoendoproteolytic cleavage activity residues include Asp90, His147, and Ser252. Catalysis depends on Ser252, which acts as the Schiff-base intermediate with substrate; via pyruvic acid; for decarboxylase activity. Pyruvic acid (Ser); by autocatalysis is present on Ser252.

The protein belongs to the phosphatidylserine decarboxylase family. PSD-B subfamily. Prokaryotic type I sub-subfamily. Heterodimer of a large membrane-associated beta subunit and a small pyruvoyl-containing alpha subunit. Pyruvate is required as a cofactor. In terms of processing, is synthesized initially as an inactive proenzyme. Formation of the active enzyme involves a self-maturation process in which the active site pyruvoyl group is generated from an internal serine residue via an autocatalytic post-translational modification. Two non-identical subunits are generated from the proenzyme in this reaction, and the pyruvate is formed at the N-terminus of the alpha chain, which is derived from the carboxyl end of the proenzyme. The autoendoproteolytic cleavage occurs by a canonical serine protease mechanism, in which the side chain hydroxyl group of the serine supplies its oxygen atom to form the C-terminus of the beta chain, while the remainder of the serine residue undergoes an oxidative deamination to produce ammonia and the pyruvoyl prosthetic group on the alpha chain. During this reaction, the Ser that is part of the protease active site of the proenzyme becomes the pyruvoyl prosthetic group, which constitutes an essential element of the active site of the mature decarboxylase.

Its subcellular location is the cell membrane. It carries out the reaction a 1,2-diacyl-sn-glycero-3-phospho-L-serine + H(+) = a 1,2-diacyl-sn-glycero-3-phosphoethanolamine + CO2. The protein operates within phospholipid metabolism; phosphatidylethanolamine biosynthesis; phosphatidylethanolamine from CDP-diacylglycerol: step 2/2. Its function is as follows. Catalyzes the formation of phosphatidylethanolamine (PtdEtn) from phosphatidylserine (PtdSer). The chain is Phosphatidylserine decarboxylase proenzyme from Ectopseudomonas mendocina (strain ymp) (Pseudomonas mendocina).